A 371-amino-acid polypeptide reads, in one-letter code: Choline kinase B1 (371 aa).

It belongs to the choline/ethanolamine kinase family. It depends on Mg(2+) as a cofactor.

It catalyses the reaction choline + ATP = phosphocholine + ADP + H(+). This Caenorhabditis elegans protein is Choline kinase B1 (ckb-1).